A 501-amino-acid chain; its full sequence is Cytochrome P450 monooxygenase 76AD131 (501 aa).

A helical transmembrane segment spans residues 1 to 21; the sequence is MGYYAIFAVVLPFLWTCFYLL. Asparagine 115 and asparagine 264 each carry an N-linked (GlcNAc...) asparagine glycan. A heme-binding site is contributed by cysteine 444.

It belongs to the cytochrome P450 family. It depends on heme as a cofactor. Highly expressed in aerial parts, in both skin and flesh tissues.

The protein resides in the membrane. It carries out the reaction tyramine + reduced [NADPH--hemoprotein reductase] + O2 = dopamine + oxidized [NADPH--hemoprotein reductase] + H2O + H(+). It catalyses the reaction 3-methoxytyramine + reduced [NADPH--hemoprotein reductase] + O2 = 3,4-dihydroxy-5-methoxyphenethylamine + oxidized [NADPH--hemoprotein reductase] + H2O + H(+). It functions in the pathway aromatic compound metabolism. Its pathway is alkaloid biosynthesis. Functionally, cytochrome P450 monooxygenase participating in the biosynthesis of natural products derived from phenylethylamine, including mescaline, a natural hallucinogen potentially used in psychotherapeutic treatments. Catalyzes the hydroxylation of tyramine to dopamine and of 3-methoxytyramine to 3,4-dihydroxy-5-methoxyphenethylamine. This chain is Cytochrome P450 monooxygenase 76AD131, found in Lophophora williamsii (Peyote).